Reading from the N-terminus, the 302-residue chain is Enoyl-CoA delta isomerase 1, mitochondrial (302 aa).

The transit peptide at 1–41 (MALVASVRVPARVLLRAGARLPGAALGRTERAAGGGDGARR) directs the protein to the mitochondrion. The residue at position 61 (lysine 61) is an N6-acetyllysine; alternate. An N6-succinyllysine; alternate modification is found at lysine 61. Position 84 is an N6-succinyllysine (lysine 84). Lysine 89 is subject to N6-acetyllysine. Residues 106–110 (AGLDL), glycine 153, and asparagine 177 each bind substrate. An N6-acetyllysine; alternate modification is found at lysine 283. The residue at position 283 (lysine 283) is an N6-succinyllysine; alternate. The residue at position 288 (lysine 288) is an N6-succinyllysine.

The protein belongs to the enoyl-CoA hydratase/isomerase family. Homotrimer. As to expression, expressed in liver (at protein level).

It is found in the mitochondrion matrix. It catalyses the reaction a (3Z)-enoyl-CoA = a 4-saturated (2E)-enoyl-CoA. The catalysed reaction is a (3E)-enoyl-CoA = a 4-saturated (2E)-enoyl-CoA. The enzyme catalyses (3Z)-octenoyl-CoA = (2E)-octenoyl-CoA. It carries out the reaction (2E)-tetradecenoyl-CoA = (3Z)-tetradecenoyl-CoA. It catalyses the reaction (3Z)-dodecenoyl-CoA = (2E)-dodecenoyl-CoA. The catalysed reaction is (3Z)-hexenoyl-CoA = (2E)-hexenoyl-CoA. The enzyme catalyses (3Z)-decenoyl-CoA = (2E)-decenoyl-CoA. It participates in lipid metabolism; fatty acid beta-oxidation. Key enzyme of fatty acid beta-oxidation. Able to isomerize both 3-cis (3Z) and 3-trans (3E) double bonds into the 2-trans (2E) form in a range of enoyl-CoA species, with a preference for (3Z)-enoyl-CoAs over (3E)-enoyl-CoAs. The catalytic efficiency of this enzyme is not affected by the fatty acyl chain length. This is Enoyl-CoA delta isomerase 1, mitochondrial (ECI1) from Homo sapiens (Human).